A 466-amino-acid polypeptide reads, in one-letter code: Glutamate decarboxylase (466 aa).

The residue at position 277 (Lys277) is an N6-(pyridoxal phosphate)lysine.

The protein belongs to the group II decarboxylase family. The cofactor is pyridoxal 5'-phosphate.

It carries out the reaction L-glutamate + H(+) = 4-aminobutanoate + CO2. In terms of biological role, converts internalized glutamate to GABA and increases the internal pH. Involved in glutamate-dependent acid resistance. The sequence is that of Glutamate decarboxylase (gadB) from Lactococcus lactis subsp. cremoris (strain MG1363).